The primary structure comprises 137 residues: Small ribosomal subunit protein uS12 (137 aa).

The disordered stretch occupies residues 1 to 57; that stretch reads MPTINQLVRKPRKSKVEKSKSPALNVGYNSHKKVQTNVSSPQKRGVATRVGTMTPKK. Residue Asp102 is modified to 3-methylthioaspartic acid.

The protein belongs to the universal ribosomal protein uS12 family. As to quaternary structure, part of the 30S ribosomal subunit. Contacts proteins S8 and S17. May interact with IF1 in the 30S initiation complex.

With S4 and S5 plays an important role in translational accuracy. Its function is as follows. Interacts with and stabilizes bases of the 16S rRNA that are involved in tRNA selection in the A site and with the mRNA backbone. Located at the interface of the 30S and 50S subunits, it traverses the body of the 30S subunit contacting proteins on the other side and probably holding the rRNA structure together. The combined cluster of proteins S8, S12 and S17 appears to hold together the shoulder and platform of the 30S subunit. In Streptococcus pneumoniae serotype 2 (strain D39 / NCTC 7466), this protein is Small ribosomal subunit protein uS12.